Consider the following 149-residue polypeptide: Nucleoside diphosphate kinase (149 aa).

ATP-binding residues include lysine 9, phenylalanine 57, arginine 85, threonine 91, arginine 102, and asparagine 112. Catalysis depends on histidine 115, which acts as the Pros-phosphohistidine intermediate.

This sequence belongs to the NDK family. In terms of assembly, homotetramer. It depends on Mg(2+) as a cofactor.

The protein localises to the cytoplasm. The catalysed reaction is a 2'-deoxyribonucleoside 5'-diphosphate + ATP = a 2'-deoxyribonucleoside 5'-triphosphate + ADP. It catalyses the reaction a ribonucleoside 5'-diphosphate + ATP = a ribonucleoside 5'-triphosphate + ADP. Its function is as follows. Major role in the synthesis of nucleoside triphosphates other than ATP. The ATP gamma phosphate is transferred to the NDP beta phosphate via a ping-pong mechanism, using a phosphorylated active-site intermediate. The sequence is that of Nucleoside diphosphate kinase from Staphylococcus haemolyticus (strain JCSC1435).